A 451-amino-acid chain; its full sequence is ACT domain-containing protein ACR4 (451 aa).

ACT domains are found at residues 35 to 118, 123 to 200, 259 to 335, and 337 to 416; these read VIRV…VIPS, VIEL…NTPR, VVTV…VSEG, and KLEL…QEQQ. The tract at residues 409 to 428 is disordered; sequence KNNPQEQQQRQKSPSHESPT. Residues 410–420 are compositionally biased toward polar residues; sequence NNPQEQQQRQK.

As to expression, highly expressed in flowers and at lower levels in leaves and siliques.

Its function is as follows. May bind amino acids. This is ACT domain-containing protein ACR4 from Arabidopsis thaliana (Mouse-ear cress).